The chain runs to 374 residues: DNA replication and repair protein RecF (374 aa).

34–41 lines the ATP pocket; the sequence is GDNGAGKT.

Belongs to the RecF family.

It is found in the cytoplasm. Its function is as follows. The RecF protein is involved in DNA metabolism; it is required for DNA replication and normal SOS inducibility. RecF binds preferentially to single-stranded, linear DNA. It also seems to bind ATP. The chain is DNA replication and repair protein RecF from Rhizobium johnstonii (strain DSM 114642 / LMG 32736 / 3841) (Rhizobium leguminosarum bv. viciae).